The following is a 117-amino-acid chain: MTRAKSGKISKNRHKKILKLAKGYRGRANSCFRVAIEKVEKALQYAYRDRRNRKRDFRGLWIQRINAAVREHGLVYSQFMGALKKTEIAIDRKVLAELAVNNSDGFVSIVEKAKAHI.

Belongs to the bacterial ribosomal protein bL20 family.

In terms of biological role, binds directly to 23S ribosomal RNA and is necessary for the in vitro assembly process of the 50S ribosomal subunit. It is not involved in the protein synthesizing functions of that subunit. This Rickettsia rickettsii (strain Iowa) protein is Large ribosomal subunit protein bL20.